Consider the following 402-residue polypeptide: Serine/threonine-protein phosphatase 4 regulatory subunit 2 (402 aa).

The segment covering 206–248 (MDEEFEDEDYEDHEDEEEDEEDEDNDSDVDEMEAEEVEEDASD) has biased composition (acidic residues). 3 disordered regions span residues 206-270 (MDEE…DVTD), 291-311 (SVLS…ILSR), and 331-402 (GFIT…KKRM). A compositionally biased stretch (low complexity) spans 348–358 (SSSSMVSPVVS). Residues 371–396 (INTFISPDTTNSVTQAEKNELSTSPL) are compositionally biased toward polar residues.

It belongs to the PPP4R2 family. Regulatory subunit (R2) of the histone H2A phosphatase complex (HTP-C) consisting of PPH3, PSY2 and PSY4.

The protein resides in the nucleus. Its function is as follows. Regulatory subunit of the histone H2A phosphatase complex, which dephosphorylates H2AS128ph (gamma-H2A) that has been displaced from sites of DNA lesions in the double-stranded DNA break repair process. Dephosphorylation is necessary for efficient recovery from the DNA damage checkpoint. The polypeptide is Serine/threonine-protein phosphatase 4 regulatory subunit 2 (PSY4) (Kluyveromyces lactis (strain ATCC 8585 / CBS 2359 / DSM 70799 / NBRC 1267 / NRRL Y-1140 / WM37) (Yeast)).